Consider the following 276-residue polypeptide: AT-hook motif nuclear-localized protein 17 (276 aa).

Residues 1 to 10 (MKGEYREQKS) are compositionally biased toward basic and acidic residues. Disordered stretches follow at residues 1–80 (MKGE…RDTD) and 212–248 (AEEE…SGGE). 2 stretches are compositionally biased toward low complexity: residues 20–31 (HQQQQQQQQQQH) and 40–49 (SSTVTPTVDD). Residues 56–68 (RRPRGRPPGSKNK) constitute a DNA-binding region (a.T hook). The 151-residue stretch at 80–230 (DPPMSPYILE…GTGEREGQSP (151 aa)) folds into the PPC domain. Residues 212–227 (AEEEQKHSAGTGEREG) are compositionally biased toward basic and acidic residues. Residues 233-248 (SGGGEESGQMAGSGGE) are compositionally biased toward gly residues.

The protein localises to the nucleus. Transcription factor that specifically binds AT-rich DNA sequences related to the nuclear matrix attachment regions (MARs). The sequence is that of AT-hook motif nuclear-localized protein 17 from Arabidopsis thaliana (Mouse-ear cress).